The primary structure comprises 213 residues: CDP-diacylglycerol--inositol 3-phosphatidyltransferase (213 aa).

Topologically, residues Met-1–Asn-5 are cytoplasmic. Residues Ile-6–Phe-26 form a helical membrane-spanning segment. Residue Tyr-27 is a topological domain, lumenal. Residues Phe-28–Ala-48 traverse the membrane as a helical segment. Mg(2+)-binding residues include Asp-47 and Asp-50. The Cytoplasmic segment spans residues Phe-49–Arg-73. 3 residues coordinate a CDP-1,2-diacyl-sn-glycerol: Gly-51, Arg-55, and Thr-61. Mg(2+) is bound by residues Asp-68 and Asp-72. Asp-72 acts as the Proton acceptor in catalysis. Residues Cys-74–Phe-94 form a helical membrane-spanning segment. A topological domain (lumenal) is located at residue Gln-95. The chain crosses the membrane as a helical span at residues Leu-96–Gly-116. At Ser-117–Pro-139 the chain is on the cytoplasmic side. The chain crosses the membrane as a helical span at residues Ala-140–Phe-160. Residues Ser-161–Met-174 are Lumenal-facing. Residues Gly-175–Ile-195 form a helical membrane-spanning segment. Residues Thr-196–Lys-213 lie on the Cytoplasmic side of the membrane.

It belongs to the CDP-alcohol phosphatidyltransferase class-I family. Mn(2+) serves as cofactor. Mg(2+) is required as a cofactor.

It localises to the endoplasmic reticulum membrane. Its subcellular location is the cell membrane. The catalysed reaction is a CDP-1,2-diacyl-sn-glycerol + myo-inositol = a 1,2-diacyl-sn-glycero-3-phospho-(1D-myo-inositol) + CMP + H(+). In terms of biological role, catalyzes the biosynthesis of phosphatidylinositol (PtdIns) as well as PtdIns:inositol exchange reaction. May thus act to reduce an excessive cellular PtdIns content. The exchange activity is due to the reverse reaction of PtdIns synthase and is dependent on CMP, which is tightly bound to the enzyme. The protein is CDP-diacylglycerol--inositol 3-phosphatidyltransferase of Mus musculus (Mouse).